The sequence spans 511 residues: Cytochrome P450 monooxygenase roqR (511 aa).

A signal peptide spans 1-23 (MSGYVLLTVQLAAVLLLVTLWRA). 3 N-linked (GlcNAc...) asparagine glycosylation sites follow: Asn-364, Asn-373, and Asn-383. Cys-455 provides a ligand contact to heme.

The protein belongs to the cytochrome P450 family. The cofactor is heme.

The protein operates within alkaloid biosynthesis. Cytochrome P450 monooxygenase; part of the gene cluster that mediates the biosynthesis of the mycotoxins roquefortine C and meleagrin. The first stage is catalyzed by the dipeptide synthase roqA which condenses histidine and tryptophan to produce histidyltryptophanyldiketopiperazine (HTD). HTD is then converted to roquefortine C through two possible pathways. In the first pathway, prenyltransferase roqD transforms HTD to the intermediate roquefortine D, which is in turn converted to roquefortine C by the cytochrome P450 monooxygenase roqR. In the second pathway, HTD is first converted to the intermediate dehydrohistidyltryptophanyldi-ketopiperazine (DHTD) by roqR which is then prenylated by roqD to form roquefortine C. Roquefortine C can be further transformed to meleagrin via three more reactions including oxydation to glandicolin A by roqM, which is further reduced to glandicoline B by roqO. Finally, glandicoline B is converted to meleagrin by the glandicoline B O-methyltransferase roqN. More studies identified further branching and additional metabolites produced by the roquefortine/meleagrin cluster, including roquefortine F, roquefortine L, roquefortine M, roquefortine N and neoxaline. The sequence is that of Cytochrome P450 monooxygenase roqR from Penicillium rubens (strain ATCC 28089 / DSM 1075 / NRRL 1951 / Wisconsin 54-1255) (Penicillium chrysogenum).